The following is a 294-amino-acid chain: Probable metallo-hydrolase BURPS1710b_2304 (294 aa).

Residues His68, His70, Asp72, His73, His143, Asp170, and His212 each contribute to the a divalent metal cation site.

The protein belongs to the metallo-beta-lactamase superfamily. The cofactor is a divalent metal cation.

Its function is as follows. Probable hydrolase. Does not have beta-lactamase activity. The protein is Probable metallo-hydrolase BURPS1710b_2304 of Burkholderia pseudomallei (strain 1710b).